A 323-amino-acid polypeptide reads, in one-letter code: Aquaporin NIP3-1 (323 aa).

The residue at position 1 (methionine 1) is an N-acetylmethionine. Transmembrane regions (helical) follow at residues leucine 45 to valine 65 and valine 73 to isoleucine 93. An NPA 1 motif is present at residues asparagine 102 to alanine 104. The next 3 membrane-spanning stretches (helical) occupy residues glycine 122–phenylalanine 142, threonine 167–alanine 187, and phenylalanine 196–serine 216. An NPA 2 motif is present at residues asparagine 221 to alanine 223. The helical transmembrane segment at tryptophan 239–leucine 259 threads the bilayer.

Belongs to the MIP/aquaporin (TC 1.A.8) family. NIP (TC 1.A.8.12) subfamily.

Its subcellular location is the membrane. Functionally, aquaporins facilitate the transport of water and small neutral solutes across cell membranes. The polypeptide is Aquaporin NIP3-1 (NIP3-1) (Arabidopsis thaliana (Mouse-ear cress)).